A 448-amino-acid chain; its full sequence is Solute carrier family 52, riboflavin transporter, member 3-A (448 aa).

The next 3 helical transmembrane spans lie at 11-31 (AFGL…PLIV), 40-60 (LPSY…LVTL), and 73-93 (LAIY…AVFW). Asn94 carries an N-linked (GlcNAc...) asparagine glycan. 2 consecutive transmembrane segments (helical) span residues 107-127 (AFFI…VTFL) and 138-158 (ITTY…VALA). N-linked (GlcNAc...) asparagine glycans are attached at residues Asn168, Asn171, Asn175, and Asn194. Transmembrane regions (helical) follow at residues 198–218 (EIFF…FLIL), 280–300 (AFIY…LPSV), 315–335 (LSAA…MFFP), 339–359 (LVFL…NMAM), 376–396 (AIIV…KVMV), and 407–427 (ALVW…IIMF).

The protein belongs to the riboflavin transporter family.

Its subcellular location is the cell membrane. It carries out the reaction riboflavin(in) = riboflavin(out). Plasma membrane transporter mediating the uptake by cells of the water soluble vitamin B2/riboflavin that plays a key role in biochemical oxidation-reduction reactions of the carbohydrate, lipid, and amino acid metabolism. The sequence is that of Solute carrier family 52, riboflavin transporter, member 3-A (slc52a3a) from Danio rerio (Zebrafish).